Consider the following 78-residue polypeptide: MTEADQVRKRINELYKKKQESGLTEAEEAERKELHKQFIANFRAGFKQQLDSLVIVDDQGKDVTPDKAKQIQKKKVLR.

This sequence belongs to the UPF0291 family.

Its subcellular location is the cytoplasm. In Lactobacillus delbrueckii subsp. bulgaricus (strain ATCC 11842 / DSM 20081 / BCRC 10696 / JCM 1002 / NBRC 13953 / NCIMB 11778 / NCTC 12712 / WDCM 00102 / Lb 14), this protein is UPF0291 protein Ldb1355.